The sequence spans 234 residues: Synaptogyrin-4 (234 aa).

Residues 18–169 (FLRRPKTITR…QAYLAFQDLR (152 aa)) enclose the MARVEL domain. The next 4 membrane-spanning stretches (helical) occupy residues 25–45 (ITRV…LTDG), 66–86 (CSFA…FLVL), 104–124 (LLDF…FCFL), and 145–165 (AAIA…YLAF).

This sequence belongs to the synaptogyrin family.

Its subcellular location is the membrane. This Homo sapiens (Human) protein is Synaptogyrin-4 (SYNGR4).